We begin with the raw amino-acid sequence, 309 residues long: NADH-quinone oxidoreductase subunit C (309 aa).

The segment at 198–309 (LPGDEKAVPP…RTRKKKEDGE (112 aa)) is disordered. Over residues 220 to 230 (TKGDAKADVPK) the composition is skewed to basic and acidic residues. A compositionally biased stretch (low complexity) spans 246–261 (DAAAKPVAEAAAPAAT).

The protein belongs to the complex I 30 kDa subunit family. In terms of assembly, NDH-1 is composed of 14 different subunits. Subunits NuoB, C, D, E, F, and G constitute the peripheral sector of the complex.

The protein localises to the cell inner membrane. It catalyses the reaction a quinone + NADH + 5 H(+)(in) = a quinol + NAD(+) + 4 H(+)(out). Its function is as follows. NDH-1 shuttles electrons from NADH, via FMN and iron-sulfur (Fe-S) centers, to quinones in the respiratory chain. The immediate electron acceptor for the enzyme in this species is believed to be ubiquinone. Couples the redox reaction to proton translocation (for every two electrons transferred, four hydrogen ions are translocated across the cytoplasmic membrane), and thus conserves the redox energy in a proton gradient. The protein is NADH-quinone oxidoreductase subunit C of Novosphingobium aromaticivorans (strain ATCC 700278 / DSM 12444 / CCUG 56034 / CIP 105152 / NBRC 16084 / F199).